The primary structure comprises 209 residues: Large ribosomal subunit protein uL3 (209 aa).

The segment at 122 to 152 (AIKRHGQSRGPMSHGSRYHRRPGSMGPVDPN) is disordered.

It belongs to the universal ribosomal protein uL3 family. As to quaternary structure, part of the 50S ribosomal subunit. Forms a cluster with proteins L14 and L19. Interacts with RNA helicase CshA.

Its function is as follows. One of the primary rRNA binding proteins, it binds directly near the 3'-end of the 23S rRNA, where it nucleates assembly of the 50S subunit. Strongly stimulates 23S rRNA precursor processing by mini-ribonuclease 3 (MrnC); 20-30% DMSO can replace L3, suggesting the protein may alter rRNA conformation. This Bacillus subtilis (strain 168) protein is Large ribosomal subunit protein uL3.